Reading from the N-terminus, the 298-residue chain is uncharacterized protein (298 aa).

Helical transmembrane passes span 5 to 25 (SLATLFALLILATLINRFLLW), 52 to 72 (VISGPRWMTLTFFALISFLAL), 105 to 125 (LFLLFIPLAGFLILATGQVLV), 138 to 158 (IFWGWIMTVFALSHAAWLLML), 163 to 183 (IQGGALLVLFLLALTESNDIA), 208 to 228 (GLMGGVITIMIASLIIGPLLT), 236 to 256 (LLAGLLIGISGFCGDVVMSAI), and 273 to 293 (GGLLDRIDSLIFTAPVFFYFI).

It belongs to the CDS family.

Its subcellular location is the cell membrane. This is an uncharacterized protein from Escherichia coli (strain K12).